The primary structure comprises 284 residues: L-ribulose-5-phosphate 3-epimerase UlaE (284 aa).

It belongs to the L-ribulose-5-phosphate 3-epimerase family.

It catalyses the reaction L-ribulose 5-phosphate = L-xylulose 5-phosphate. Its pathway is cofactor degradation; L-ascorbate degradation; D-xylulose 5-phosphate from L-ascorbate: step 3/4. In terms of biological role, catalyzes the isomerization of L-xylulose-5-phosphate to L-ribulose-5-phosphate. Is involved in the anaerobic L-ascorbate utilization. The protein is L-ribulose-5-phosphate 3-epimerase UlaE of Escherichia coli O45:K1 (strain S88 / ExPEC).